A 1128-amino-acid chain; its full sequence is Cordon-bleu protein-like 1 (1128 aa).

The tract at residues 1-35 (MDGRTPRPQDAPARRKPKAKAPLPPAETKYTDVSS) is disordered. Threonine 139 carries the phosphothreonine modification. Residues serine 204, serine 222, and serine 256 each carry the phosphoserine modification. Disordered stretches follow at residues 249–309 (KKRD…VPQD), 325–441 (MSVD…SPKS), and 454–499 (TLKN…TSNG). Position 260 is a phosphothreonine (threonine 260). The span at 270 to 286 (FTRSNTISKPYISNTLP) shows a compositional bias: polar residues. Serine 273 carries the phosphoserine modification. Threonine 284 carries the post-translational modification Phosphothreonine. Residues 291 to 296 (KKRRAP) carry the KKRRAP 1 motif. 4 positions are modified to phosphoserine: serine 326, serine 333, serine 344, and serine 356. The span at 345–357 (LQLSSMSAGNSSL) shows a compositional bias: polar residues. A KKRRAP 2 motif is present at residues 360–365 (TKRKAP). Residues 397–415 (SEANSPEELSSPAGISSDY) show a composition bias toward polar residues. Over residues 416-425 (SLEEIDEKEE) the composition is skewed to acidic residues. Phosphoserine occurs at positions 438, 441, 461, 471, and 474. The segment covering 475–488 (MEEKQETKSTDGQE) has biased composition (basic and acidic residues). 6 positions are modified to phosphoserine: serine 563, serine 584, serine 786, serine 813, serine 814, and serine 821. 4 disordered regions span residues 780-840 (TEDS…PFAP), 882-964 (SAAA…SQVS), 995-1081 (RSQS…PEQM), and 1103-1128 (IPSN…QDGH). Basic and acidic residues predominate over residues 899 to 908 (LTNKEAERDM). Serine 911, serine 917, serine 947, serine 1069, and serine 1070 each carry phosphoserine. 2 stretches are compositionally biased toward polar residues: residues 1045–1081 (SAHN…PEQM) and 1103–1122 (IPSN…SMSP). In terms of domain architecture, WH2 spans 1081 to 1101 (MRQSLLTAIRSGEAAAKLKRV). At serine 1121 the chain carries Phosphoserine.

The protein is Cordon-bleu protein-like 1 of Homo sapiens (Human).